The following is an 83-amino-acid chain: Small ribosomal subunit protein bS16 (83 aa).

The protein belongs to the bacterial ribosomal protein bS16 family.

This Shewanella woodyi (strain ATCC 51908 / MS32) protein is Small ribosomal subunit protein bS16.